Consider the following 293-residue polypeptide: Ribosomal protein L11 methyltransferase (293 aa).

S-adenosyl-L-methionine is bound by residues threonine 146, glycine 167, aspartate 189, and asparagine 230.

This sequence belongs to the methyltransferase superfamily. PrmA family.

The protein resides in the cytoplasm. The catalysed reaction is L-lysyl-[protein] + 3 S-adenosyl-L-methionine = N(6),N(6),N(6)-trimethyl-L-lysyl-[protein] + 3 S-adenosyl-L-homocysteine + 3 H(+). Its function is as follows. Methylates ribosomal protein L11. The polypeptide is Ribosomal protein L11 methyltransferase (Colwellia psychrerythraea (strain 34H / ATCC BAA-681) (Vibrio psychroerythus)).